Consider the following 338-residue polypeptide: Large ribosomal subunit protein uL10 (338 aa).

Positions 297 to 338 (PSAQQTQTQQSTAEEKKEEKKEEEKKGPSEEEIGSGLASLFG) are disordered. Over residues 298-308 (SAQQTQTQQST) the composition is skewed to low complexity. Positions 309-325 (AEEKKEEKKEEEKKGPS) are enriched in basic and acidic residues.

It belongs to the universal ribosomal protein uL10 family. In terms of assembly, part of the 50S ribosomal subunit. Forms part of the ribosomal stalk which helps the ribosome interact with GTP-bound translation factors. Forms a heptameric L10(L12)2(L12)2(L12)2 complex, where L10 forms an elongated spine to which the L12 dimers bind in a sequential fashion.

Forms part of the ribosomal stalk, playing a central role in the interaction of the ribosome with GTP-bound translation factors. This is Large ribosomal subunit protein uL10 from Saccharolobus islandicus (strain Y.N.15.51 / Yellowstone #2) (Sulfolobus islandicus).